Here is a 344-residue protein sequence, read N- to C-terminus: Phosphate acyltransferase (344 aa).

It belongs to the PlsX family. In terms of assembly, homodimer. Probably interacts with PlsY.

The protein resides in the cytoplasm. The catalysed reaction is a fatty acyl-[ACP] + phosphate = an acyl phosphate + holo-[ACP]. It participates in lipid metabolism; phospholipid metabolism. Its function is as follows. Catalyzes the reversible formation of acyl-phosphate (acyl-PO(4)) from acyl-[acyl-carrier-protein] (acyl-ACP). This enzyme utilizes acyl-ACP as fatty acyl donor, but not acyl-CoA. The sequence is that of Phosphate acyltransferase from Erwinia tasmaniensis (strain DSM 17950 / CFBP 7177 / CIP 109463 / NCPPB 4357 / Et1/99).